We begin with the raw amino-acid sequence, 161 residues long: Nucleotide-binding protein Bd0338 (161 aa).

The protein belongs to the YajQ family.

In terms of biological role, nucleotide-binding protein. In Bdellovibrio bacteriovorus (strain ATCC 15356 / DSM 50701 / NCIMB 9529 / HD100), this protein is Nucleotide-binding protein Bd0338.